Here is a 345-residue protein sequence, read N- to C-terminus: MSKNKLSKGQERRVQANHQRRLQQRERGAAHWDDQPLGEAQEGVVVSRFGMHADVEDAAGRIYRCNLRRTLKSLVTGDKVVWRAGSEQPSGVSGIVEAVHPRRSVLTRPDVYDGVKPIAANMDQIVIVSALLPELSLNIIDRYLVACETVEVEPLIVLNKIDLLTPASRTEVEQLMAIYRRIGYRVLMVSSQTGEGMDPFREALTGRTSIFTGQSGVGKSSLLNALLPPEHEKILVNNVSDNSGLGQHTTTTARLYHFSHGGHLIDSPGVRELGLWHLAPERIARGFIEFREYLGTCKFRDCRHDTDPGCAIRGAVESGTIAHERFDNYHRIFDSMAQVNARKSF.

The tract at residues 1–36 is disordered; that stretch reads MSKNKLSKGQERRVQANHQRRLQQRERGAAHWDDQP. Residues 23–34 are compositionally biased toward basic and acidic residues; that stretch reads QQRERGAAHWDD. The 171-residue stretch at 103 to 273 folds into the CP-type G domain; the sequence is RSVLTRPDVY…LIDSPGVREL (171 aa). GTP is bound by residues 159 to 162 and 213 to 221; these read NKID and GQSGVGKSS. The Zn(2+) site is built by cysteine 297, cysteine 302, histidine 304, and cysteine 310.

This sequence belongs to the TRAFAC class YlqF/YawG GTPase family. RsgA subfamily. As to quaternary structure, monomer. Associates with 30S ribosomal subunit, binds 16S rRNA. Zn(2+) serves as cofactor.

The protein localises to the cytoplasm. One of several proteins that assist in the late maturation steps of the functional core of the 30S ribosomal subunit. Helps release RbfA from mature subunits. May play a role in the assembly of ribosomal proteins into the subunit. Circularly permuted GTPase that catalyzes slow GTP hydrolysis, GTPase activity is stimulated by the 30S ribosomal subunit. The chain is Small ribosomal subunit biogenesis GTPase RsgA from Sodalis glossinidius (strain morsitans).